The following is a 308-amino-acid chain: tRNA pseudouridine synthase B (308 aa).

Asp48 (nucleophile) is an active-site residue.

Belongs to the pseudouridine synthase TruB family. Type 1 subfamily.

The enzyme catalyses uridine(55) in tRNA = pseudouridine(55) in tRNA. Its function is as follows. Responsible for synthesis of pseudouridine from uracil-55 in the psi GC loop of transfer RNAs. In Histophilus somni (strain 129Pt) (Haemophilus somnus), this protein is tRNA pseudouridine synthase B.